A 153-amino-acid chain; its full sequence is Small heat shock protein ibp (153 aa).

The 119-residue stretch at 35–153 folds into the sHSP domain; sequence KIISDSVPPY…KIQKIQINVK (119 aa).

The protein belongs to the small heat shock protein (HSP20) family.

In Buchnera aphidicola subsp. Thelaxes suberi, this protein is Small heat shock protein ibp (ibp).